The primary structure comprises 137 residues: Small ribosomal subunit protein eS19 (137 aa).

The protein belongs to the eukaryotic ribosomal protein eS19 family. In terms of assembly, component of the small ribosomal subunit.

Its subcellular location is the cytoplasm. In Encephalitozoon cuniculi (strain GB-M1) (Microsporidian parasite), this protein is Small ribosomal subunit protein eS19 (RPS19).